The chain runs to 255 residues: Thiazole synthase (255 aa).

Lysine 95 acts as the Schiff-base intermediate with DXP in catalysis. Residues glycine 156, 182-183 (AG), and 204-205 (NT) each bind 1-deoxy-D-xylulose 5-phosphate.

This sequence belongs to the ThiG family. As to quaternary structure, homotetramer. Forms heterodimers with either ThiH or ThiS.

It is found in the cytoplasm. The enzyme catalyses [ThiS sulfur-carrier protein]-C-terminal-Gly-aminoethanethioate + 2-iminoacetate + 1-deoxy-D-xylulose 5-phosphate = [ThiS sulfur-carrier protein]-C-terminal Gly-Gly + 2-[(2R,5Z)-2-carboxy-4-methylthiazol-5(2H)-ylidene]ethyl phosphate + 2 H2O + H(+). The protein operates within cofactor biosynthesis; thiamine diphosphate biosynthesis. Catalyzes the rearrangement of 1-deoxy-D-xylulose 5-phosphate (DXP) to produce the thiazole phosphate moiety of thiamine. Sulfur is provided by the thiocarboxylate moiety of the carrier protein ThiS. In vitro, sulfur can be provided by H(2)S. This chain is Thiazole synthase, found in Photorhabdus laumondii subsp. laumondii (strain DSM 15139 / CIP 105565 / TT01) (Photorhabdus luminescens subsp. laumondii).